The chain runs to 398 residues: tRNA-specific 2-thiouridylase MnmA (398 aa).

ATP is bound by residues 19 to 26 (AMSGGVDS) and leucine 45. Residue cysteine 113 is the Nucleophile of the active site. A disulfide bridge connects residues cysteine 113 and cysteine 210. Residue glycine 137 participates in ATP binding. An interaction with tRNA region spans residues 160–162 (RDQ). The active-site Cysteine persulfide intermediate is cysteine 210.

It belongs to the MnmA/TRMU family.

Its subcellular location is the cytoplasm. The catalysed reaction is S-sulfanyl-L-cysteinyl-[protein] + uridine(34) in tRNA + AH2 + ATP = 2-thiouridine(34) in tRNA + L-cysteinyl-[protein] + A + AMP + diphosphate + H(+). Its function is as follows. Catalyzes the 2-thiolation of uridine at the wobble position (U34) of tRNA, leading to the formation of s(2)U34. In Rhodopseudomonas palustris (strain HaA2), this protein is tRNA-specific 2-thiouridylase MnmA.